The sequence spans 404 residues: Cysteine desulfurase IscS (404 aa).

Residues 75–76 (AT), Asn155, Gln183, and 203–205 (SGH) each bind pyridoxal 5'-phosphate. Lys206 carries the N6-(pyridoxal phosphate)lysine modification. Thr243 lines the pyridoxal 5'-phosphate pocket. Cys328 acts as the Cysteine persulfide intermediate in catalysis. Position 328 (Cys328) interacts with [2Fe-2S] cluster.

This sequence belongs to the class-V pyridoxal-phosphate-dependent aminotransferase family. NifS/IscS subfamily. Homodimer. Forms a heterotetramer with IscU, interacts with other sulfur acceptors. Requires pyridoxal 5'-phosphate as cofactor.

The protein resides in the cytoplasm. The catalysed reaction is (sulfur carrier)-H + L-cysteine = (sulfur carrier)-SH + L-alanine. It functions in the pathway cofactor biosynthesis; iron-sulfur cluster biosynthesis. Its function is as follows. Master enzyme that delivers sulfur to a number of partners involved in Fe-S cluster assembly, tRNA modification or cofactor biosynthesis. Catalyzes the removal of elemental sulfur atoms from cysteine to produce alanine. Functions as a sulfur delivery protein for Fe-S cluster synthesis onto IscU, an Fe-S scaffold assembly protein, as well as other S acceptor proteins. The sequence is that of Cysteine desulfurase IscS from Edwardsiella ictaluri (strain 93-146).